The following is a 114-amino-acid chain: Gas vesicle protein J1 (114 aa).

The segment at 13-22 (LAEMLEMLLD) is alpha helix 1. Beta-strand stretches follow at residues 25–35 (VVVNADIAVSV) and 40–50 (LLGIELRAAIA). The short motif at 46–50 (RAAIA) is the Conserved in GvpM1/2 but not GvpA element. Alpha helix stretches follow at residues 52 to 72 (FETA…ERVE), 78 to 87 (SPDQSDPASE), and 95 to 105 (TNPLSDDSTPT). Residues 63–114 (PTGTDMERVESAANISPDQSDPASETQSETESTNPLSDDSTPTASTSAEETK) are disordered. Over residues 75–98 (ANISPDQSDPASETQSETESTNPL) the composition is skewed to polar residues. The span at 99 to 114 (SDDSTPTASTSAEETK) shows a compositional bias: low complexity.

Belongs to the gas vesicle GvpA family. In terms of assembly, gvpF to GvpM interact with each other in vitro, and may form multi-subunit complex(es). Interacts with GvpA1.

Its subcellular location is the gas vesicle. Functionally, proteins GvpF to GvpM might be involved in nucleating gas vesicle formation. Mutagenesis of residues 13-61 shows that almost none of them can be substituted and still make gas vesicles. A minor component of the gas vesicle. Gas vesicles are hollow, gas filled proteinaceous nanostructures found in several microbial planktonic microorganisms. They allow positioning of halobacteria at the optimal depth for growth in the poorly aerated, shallow brine pools of their habitat. Expression of a 9.5 kb p-vac DNA fragment containing 2 divergently transcribed regions (gvpD-gvpE-gvpF-gvpG-gvpH-gvpI-gvpJ-gvpK-gvpL-gvpM and gvpA-gvpC-gvpN-gvpO) allows H.volcanii to produce gas vesicles. All site-directed mutagenesis is tested in H.volcanii. A minimal gas vesicle can be made in H.volcanii by gvpA1-gvpO1 plus gvpF1-gvpG1-gvpJ1-gvpK1-gvpL1-gvpM1; lack of enough GvpJ1 prevents formation. A similar region restores gas vesicle production in H.halobium without the p-vac locus, but it still has the c-vac locus. The polypeptide is Gas vesicle protein J1 (gvpJ11) (Halobacterium salinarum (strain ATCC 700922 / JCM 11081 / NRC-1) (Halobacterium halobium)).